Consider the following 192-residue polypeptide: dTTP/UTP pyrophosphatase (192 aa).

The active-site Proton acceptor is the Asp71.

The protein belongs to the Maf family. YhdE subfamily. The cofactor is a divalent metal cation.

It is found in the cytoplasm. It catalyses the reaction dTTP + H2O = dTMP + diphosphate + H(+). It carries out the reaction UTP + H2O = UMP + diphosphate + H(+). Functionally, nucleoside triphosphate pyrophosphatase that hydrolyzes dTTP and UTP. May have a dual role in cell division arrest and in preventing the incorporation of modified nucleotides into cellular nucleic acids. The polypeptide is dTTP/UTP pyrophosphatase (Clostridium tetani (strain Massachusetts / E88)).